A 400-amino-acid chain; its full sequence is Nicotinate phosphoribosyltransferase (400 aa).

Residue histidine 220 is modified to Phosphohistidine; by autocatalysis.

This sequence belongs to the NAPRTase family. Transiently phosphorylated on a His residue during the reaction cycle. Phosphorylation strongly increases the affinity for substrates and increases the rate of nicotinate D-ribonucleotide production. Dephosphorylation regenerates the low-affinity form of the enzyme, leading to product release.

The enzyme catalyses nicotinate + 5-phospho-alpha-D-ribose 1-diphosphate + ATP + H2O = nicotinate beta-D-ribonucleotide + ADP + phosphate + diphosphate. Its pathway is cofactor biosynthesis; NAD(+) biosynthesis; nicotinate D-ribonucleotide from nicotinate: step 1/1. Its function is as follows. Catalyzes the synthesis of beta-nicotinate D-ribonucleotide from nicotinate and 5-phospho-D-ribose 1-phosphate at the expense of ATP. This chain is Nicotinate phosphoribosyltransferase, found in Salmonella typhi.